A 538-amino-acid chain; its full sequence is Putative outer membrane porin BglH (538 aa).

A signal peptide spans M1 to A25. Residues K52 to T82 form a disordered region. The span at A62–Q73 shows a compositional bias: polar residues.

The protein belongs to the porin LamB (TC 1.B.3) family.

It localises to the cell outer membrane. Functionally, may be a sugar porin with a broad carbohydrate specificity. This is Putative outer membrane porin BglH (bglH) from Shigella flexneri.